The following is a 289-amino-acid chain: Splicing factor C9orf78 (289 aa).

Over residues M1–R12 the composition is skewed to basic residues. Residues M1–V27 are disordered. Residues R5–V58 form an interaction with SNRNP200 region. 2 positions are modified to phosphoserine: S15 and S17. Position 147 is a phosphotyrosine (Y147). A compositionally biased stretch (basic and acidic residues) spans L232–K283. The interval L232–Y289 is disordered. Residue T253 is modified to Phosphothreonine. S261 carries the phosphoserine modification.

Belongs to the TLS1 family. In terms of assembly, component of the spliceosome. Interacts with SNRNP200; the interaction is direct. Interacts with PRPF8.

The protein localises to the nucleus. The protein resides in the chromosome. It localises to the centromere. In terms of biological role, plays a role in pre-mRNA splicing by promoting usage of the upstream 3'-splice site at alternative NAGNAG splice sites; these are sites featuring alternative acceptor motifs separated by only a few nucleotides. May also modulate exon inclusion events. Plays a role in spliceosomal remodeling by displacing WBP4 from SNRNP200 and may act to inhibit SNRNP200 helicase activity. Binds U5 snRNA. Required for proper chromosome segregation. Not required for splicing of shelterin components. The chain is Splicing factor C9orf78 (C9orf78) from Homo sapiens (Human).